The primary structure comprises 132 residues: Myelin P2 protein (132 aa).

Serine 2 carries the post-translational modification N-acetylserine. (9Z)-octadecenoate is bound by residues arginine 107 and arginine 127 to tyrosine 129. Hexadecanoate is bound by residues arginine 107 and arginine 127 to tyrosine 129.

It belongs to the calycin superfamily. Fatty-acid binding protein (FABP) family. Monomer.

It localises to the cytoplasm. In terms of biological role, may play a role in lipid transport protein in Schwann cells. May bind cholesterol. This is Myelin P2 protein (Pmp2) from Mus musculus (Mouse).